We begin with the raw amino-acid sequence, 163 residues long: uncharacterized protein (163 aa).

The interval 142 to 163 (PQIVISEHNNTKETSPSRQFEH) is disordered. Over residues 153-163 (KETSPSRQFEH) the composition is skewed to polar residues.

This sequence belongs to the RCAN family.

Its function is as follows. Inhibits calcineurin-dependent transcriptional responses by binding to the catalytic domain of calcineurin. This is an uncharacterized protein from Schizosaccharomyces pombe (strain 972 / ATCC 24843) (Fission yeast).